Consider the following 427-residue polypeptide: MASFPFSPSFMFDFELTRILGSASSGGCEVGEFKSAVGKIKKHDAESWHAAWKEQGERAESIANEAAAAGFRIPARNAYLRASNYFRASAYMFTNSEPRVVPLSERSIANFERAAGLMDGEVMFVEIPYEEGITLTGWLCLPPKEARVEGKKPLILYAGGADATKEELYFLYGHTGPQLGYAVLCLEGPGQGMLLKKSKIPLRPDFEVVAGYVLDYFSSLAKSRPDLELDLDRIAVAGAATGGYFALRAATDARIKACVAVDPFFSMWELALTRAPQSFMKLWENGWVMDNVLDTFTDAHCRGNFQAGWEMSLGKSSMGVEKSSAMLRRFKDFSLENKKDGKILERVTCPVFLTGPGNGSEMYSSADDSTLKIKDMLKKVPADKKEIWLPSDVADGGLTAKIGAWALLAQKTFLFLDKQFEVKRKAL.

The active site involves D368.

This sequence belongs to the AB hydrolase superfamily. In terms of assembly, homodimer.

Its pathway is mycotoxin biosynthesis. Its function is as follows. Alpha/beta hydrolase; part of the gene cluster that mediates the biosynthesis of GKK1032, fungal natural products containing a macrocyclic para-cyclophane connected to a decahydrofluorene ring system that show potent antitumor activities. Within the pathway, gkaG catalyzes the Knoevenagel condensation that affords the 3-pyrrolin-2-one ring, using as substrate the polyketide-tyrosyl acyl thioester product of gkaA. The pathway begins with the PKS-NRPS gkaA which, with the help of the trans-enoyl reductase gkaC, synthesizes the polyketide-tyrosyl acyl thioester product which can be reductively off-loaded by the terminal reductase (R) domain in gkaA. The alpha/beta hydrolase gkaG is then required to catalyze the subsequent Knoevenagel condensation that affords the 3-pyrrolin-2-one ring, whereas the three proteins gkaB, gkaX and gkaZ then function synergistically to form the cyclophane. The protein is Alpha/beta hydrolase gkaG of Penicillium citrinum.